Here is a 1439-residue protein sequence, read N- to C-terminus: Mediator of RNA polymerase II transcription subunit 23 (1439 aa).

The stretch at 282 to 318 forms a coiled coil; that stretch reads SQMLNLQKHQKQRYNALEEQLVNLIVQAMEMTEANDA. The interaction with Hsf stretch occupies residues 358–625; that stretch reads HIVLALHEKL…HHVPTHYRVQ (268 aa). 2 disordered regions span residues 1338 to 1372 and 1401 to 1439; these read NDNTSNNAITSQTQSPMQTQHQQQPQQPHQQQQQQ and SVPLGSGGNLQQQQQINQQQQMYMQHMQQHQHMQNMRHN. Composition is skewed to low complexity over residues 1348-1372 and 1411-1439; these read SQTQSPMQTQHQQQPQQPHQQQQQQ and QQQQQINQQQQMYMQHMQQHQHMQNMRHN.

Belongs to the Mediator complex subunit 23 family. In terms of assembly, component of the Mediator complex. Interacts with Hsf.

Its subcellular location is the nucleus. In terms of biological role, component of the Mediator complex, a coactivator involved in the regulated transcription of nearly all RNA polymerase II-dependent genes. Mediator functions as a bridge to convey information from gene-specific regulatory proteins to the basal RNA polymerase II transcription machinery. Mediator is recruited to promoters by direct interactions with regulatory proteins and serves as a scaffold for the assembly of a functional preinitiation complex with RNA polymerase II and the general transcription factors. Required for transcriptional activation in response to heat shock. In Drosophila melanogaster (Fruit fly), this protein is Mediator of RNA polymerase II transcription subunit 23 (MED23).